We begin with the raw amino-acid sequence, 512 residues long: ATP synthase subunit alpha, chloroplastic (512 aa).

Glycine 170–threonine 177 is a binding site for ATP.

It belongs to the ATPase alpha/beta chains family. As to quaternary structure, F-type ATPases have 2 components, CF(1) - the catalytic core - and CF(0) - the membrane proton channel. CF(1) has five subunits: alpha(3), beta(3), gamma(1), delta(1), epsilon(1). CF(0) has four main subunits: a, b, b' and c.

It is found in the plastid. It localises to the chloroplast thylakoid membrane. It catalyses the reaction ATP + H2O + 4 H(+)(in) = ADP + phosphate + 5 H(+)(out). Its function is as follows. Produces ATP from ADP in the presence of a proton gradient across the membrane. The alpha chain is a regulatory subunit. The polypeptide is ATP synthase subunit alpha, chloroplastic (Staurastrum punctulatum (Green alga)).